Here is a 204-residue protein sequence, read N- to C-terminus: Dephospho-CoA kinase (204 aa).

A DPCK domain is found at 13–204 (RIGLTGGIAS…LWKNTIKKLV (192 aa)). 21-26 (ASGKST) contacts ATP.

This sequence belongs to the CoaE family.

It localises to the cytoplasm. The enzyme catalyses 3'-dephospho-CoA + ATP = ADP + CoA + H(+). It participates in cofactor biosynthesis; coenzyme A biosynthesis; CoA from (R)-pantothenate: step 5/5. Its function is as follows. Catalyzes the phosphorylation of the 3'-hydroxyl group of dephosphocoenzyme A to form coenzyme A. This is Dephospho-CoA kinase from Prochlorococcus marinus subsp. pastoris (strain CCMP1986 / NIES-2087 / MED4).